The sequence spans 131 residues: Cystatin-like cysteine protease inhibitor EPIC3 (131 aa).

The signal sequence occupies residues 1 to 22 (MAFTRSIALFAGLALAASSAQG). The N-linked (GlcNAc...) asparagine glycan is linked to N33. A Secondary area of contact motif is present at residues 71-75 (QTVAG).

Belongs to the cystatin family.

It localises to the secreted. Functionally, secreted effector that interacts with and inhibits host apoplastic pathogenesis-related papain-like cysteine proteases. Inhibition of host proteases by a pathogen extracellular protease inhibitor forms a specific type of defense-counterdefense mechanism between plants and microbial pathogens. This is Cystatin-like cysteine protease inhibitor EPIC3 from Phytophthora infestans (strain T30-4) (Potato late blight agent).